Here is a 315-residue protein sequence, read N- to C-terminus: Homocysteine S-methyltransferase YbgG (315 aa).

A Hcy-binding domain is found at N2–A309. Residues C229, C294, and C295 each contribute to the Zn(2+) site.

Zn(2+) is required as a cofactor.

The catalysed reaction is S-methyl-L-methionine + L-homocysteine = 2 L-methionine + H(+). In Bacillus subtilis (strain 168), this protein is Homocysteine S-methyltransferase YbgG (ybgG).